The following is a 194-amino-acid chain: Fe/S biogenesis protein NfuA (194 aa).

2 residues coordinate [4Fe-4S] cluster: Cys152 and Cys155.

This sequence belongs to the NfuA family. In terms of assembly, homodimer. It depends on [4Fe-4S] cluster as a cofactor.

Involved in iron-sulfur cluster biogenesis. Binds a 4Fe-4S cluster, can transfer this cluster to apoproteins, and thereby intervenes in the maturation of Fe/S proteins. Could also act as a scaffold/chaperone for damaged Fe/S proteins. The chain is Fe/S biogenesis protein NfuA from Pseudomonas putida (strain ATCC 700007 / DSM 6899 / JCM 31910 / BCRC 17059 / LMG 24140 / F1).